The sequence spans 210 residues: Mitochondrial cardiolipin hydrolase (210 aa).

The Mitochondrial intermembrane segment spans residues M1–G5. The chain crosses the membrane as a helical span at residues R6–Y24. At R25–K210 the chain is on the cytoplasmic side. Positions S138–A165 constitute a PLD phosphodiesterase domain. Residues H143, K145, and D150 contribute to the active site.

This sequence belongs to the phospholipase D family. MitoPLD/Zucchini subfamily. In terms of assembly, homodimer.

Its subcellular location is the mitochondrion outer membrane. It catalyses the reaction a cardiolipin + H2O = a 1,2-diacyl-sn-glycero-3-phospho-(1'-sn-glycerol) + a 1,2-diacyl-sn-glycero-3-phosphate + H(+). In terms of biological role, presents phospholipase and nuclease activities, depending on the different physiological conditions. Plays a key role in mitochondrial fusion and fission via its phospholipase activity. In its phospholipase role, it uses the mitochondrial lipid cardiolipin as substrate to generate phosphatidate (PA or 1,2-diacyl-sn-glycero-3-phosphate), a second messenger signaling lipid. Production of PA facilitates Mitofusin-mediated fusion, whereas the cleavage of PA by the Lipin family of phosphatases produces diacylgycerol (DAG) which promotes mitochondrial fission. Regulates mitochondrial shape through facilitating mitochondrial fusion. During spermatogenesis, plays a critical role in PIWI-interacting RNA (piRNA) biogenesis. piRNAs provide essential protection against the activity of mobile genetic elements. piRNA-mediated transposon silencing is thus critical for maintaining genome stability, in particular in germline cells when transposons are mobilized as a consequence of wide-spread genomic demethylation. Has been shown to be a backbone-non-specific, single strand-specific nuclease, cleaving either RNA or DNA substrates with similar affinity. Produces 5' phosphate and 3' hydroxyl termini, suggesting it could directly participate in the processing of primary piRNA transcripts. Has been proposed to act as a cardiolipin hydrolase to generate phosphatidic acid at mitochondrial surface. Although it cannot be excluded that it can act as a phospholipase in some circumstances, this activity could not be confirmed. The protein is Mitochondrial cardiolipin hydrolase (pld6) of Xenopus laevis (African clawed frog).